Reading from the N-terminus, the 85-residue chain is MAHKKAGGSTRNGRDSESKRLGVKLFGGQEVKAGNILVRQRGTKFHGGENVGMGKDHTLFAKTAGKVKFEVKGPKNRKYVSIVAA.

Positions methionine 1–glycine 22 are disordered.

This sequence belongs to the bacterial ribosomal protein bL27 family.

This chain is Large ribosomal subunit protein bL27, found in Teredinibacter turnerae (strain ATCC 39867 / T7901).